Reading from the N-terminus, the 361-residue chain is Peptide chain release factor 1 (361 aa).

At Gln-235 the chain carries N5-methylglutamine.

Belongs to the prokaryotic/mitochondrial release factor family. Methylated by PrmC. Methylation increases the termination efficiency of RF1.

It is found in the cytoplasm. Functionally, peptide chain release factor 1 directs the termination of translation in response to the peptide chain termination codons UAG and UAA. The sequence is that of Peptide chain release factor 1 from Buchnera aphidicola subsp. Schizaphis graminum (strain Sg).